Here is a 432-residue protein sequence, read N- to C-terminus: UDP-N-acetylmuramate--L-alanine ligase (432 aa).

ATP is bound at residue 109–115; it reads GAHGKST.

This sequence belongs to the MurCDEF family.

It is found in the cytoplasm. The catalysed reaction is UDP-N-acetyl-alpha-D-muramate + L-alanine + ATP = UDP-N-acetyl-alpha-D-muramoyl-L-alanine + ADP + phosphate + H(+). The protein operates within cell wall biogenesis; peptidoglycan biosynthesis. Functionally, cell wall formation. This is UDP-N-acetylmuramate--L-alanine ligase from Campylobacter jejuni subsp. jejuni serotype O:2 (strain ATCC 700819 / NCTC 11168).